The sequence spans 290 residues: MKFLRSVYAFCSSWVGTIVIVLLVIFFIAQAFIIPSRSMVGTLYEGDMLFVKKFSYGIPIPKIPWIELPVMPDFKNNGHLIEGDRPKRGEVVVFIPPHEKKSYYVKRNFAIGGDEVLFTNEGFYLHPFESDTDKNYIAKHYPNAMTKEFMGKIFVLNPYKNEHPGIHYQKDNETFHLMEQLATQGAEANISMQLIQMEGEKVFYKKINDDEFFMIGDNRDNSSDSRFWGSVAYKNIVGSPWFVYFSLSLKNSLEMDAENNPKKRYLVRWERMFKSVGGLEKIIKKENATH.

Residues M1–S13 lie on the Cytoplasmic side of the membrane. The chain crosses the membrane as a helical span at residues W14 to I34. The Extracellular segment spans residues P35–H290. Catalysis depends on residues S38 and K106.

This sequence belongs to the peptidase S26 family.

Its subcellular location is the cell membrane. The catalysed reaction is Cleavage of hydrophobic, N-terminal signal or leader sequences from secreted and periplasmic proteins.. This is Signal peptidase I (lepB) from Helicobacter pylori (strain ATCC 700392 / 26695) (Campylobacter pylori).